A 213-amino-acid chain; its full sequence is Type II restriction enzyme BamHI (213 aa).

Mg(2+)-binding residues include glutamate 77, aspartate 94, glutamate 111, and phenylalanine 112. The active-site Proton acceptor is glutamate 113.

In terms of assembly, homodimer. Requires Mg(2+) as cofactor.

It catalyses the reaction Endonucleolytic cleavage of DNA to give specific double-stranded fragments with terminal 5'-phosphates.. Its function is as follows. A P subtype restriction enzyme that recognizes the double-stranded sequence 5'-GGATCC-3' and cleaves after G-1. The sequence is that of Type II restriction enzyme BamHI from Bacillus amyloliquefaciens (Bacillus velezensis).